A 74-amino-acid chain; its full sequence is Peptide BmKb2 (74 aa).

Positions M1 to A22 are cleaved as a signal peptide. A Lysine amide modification is found at K40. The propeptide occupies D46 to Y74.

Belongs to the non-disulfide-bridged peptide (NDBP) superfamily. Short antimicrobial peptide (group 4) family.

It localises to the secreted. Its subcellular location is the target cell membrane. In terms of biological role, antibacterial peptide. This peptide gene is up-regulated at the transcriptional level after the venom gland is challenged by Gram-positive bacteria. The chain is Peptide BmKb2 from Olivierus martensii (Manchurian scorpion).